The sequence spans 546 residues: MAFWRNRHESPAISQERSPSPDRFQNSEDIREDNNNYNEDEKLGWFASFMGMFSLPYDWYLSINEDIAVIDWDSKSNSVAWPLGNVLTFLFFSVRLLQDNVIAPNINKLTHSDDAFDFSKSKNLQKYDYFQQYGGSASSSENLYYKMLRQLHRLFYLLTVLLLITNISVTYRYLFAHFQTYSIFYWKTVPKSKNVTKKSLHDLNHTYVEDAKRDSLWGMIKYLLFNGSHDDETNRAHYYELRKWTPSRFLTSFFVSFSPIAFCFLWMTDVTFKTLIPIIIHQYVLWFIVIDRYEQKLKDEQILSMSSVAELNSKVIQPKMNVLKQDAMVDATPYNDGIVYFYPAYTTTRSHVFATHTLSGKLSKEKYNPRTDSFEDANSQRTENYVRFSYHHPKSINGAYVRESYPSRQHSPRLSPSRYSHLQSGNTPSAPSTPLLIPSQQPHFDHSMLANASRNHNISERRNSHSPIKQHFANRLLNYPDETNDSIPDVSDDRFRMDDRFRRGRQGYFNRSPDINSGTLHYDDGDDDDNRISKSPFRNSSSSPFR.

Basic and acidic residues-rich tracts occupy residues 1–10 (MAFWRNRHES) and 25–35 (QNSEDIREDNN). The tract at residues 1-35 (MAFWRNRHESPAISQERSPSPDRFQNSEDIREDNN) is disordered. The next 2 membrane-spanning stretches (helical) occupy residues 155 to 175 (FYLL…RYLF) and 249 to 269 (FLTS…WMTD). 2 disordered regions span residues 405–441 (YPSR…PSQQ) and 505–546 (RQGY…SPFR). A compositionally biased stretch (polar residues) spans 406 to 441 (PSRQHSPRLSPSRYSHLQSGNTPSAPSTPLLIPSQQ). The segment covering 533-546 (SKSPFRNSSSSPFR) has biased composition (low complexity).

This sequence belongs to the NUR1 family.

The protein resides in the nucleus membrane. Member of a perinuclear network that controls recombination at multiple loci to maintain genome stability. Required for rDNA repeat stability. The protein is Nuclear rim protein 1 (NUR1) of Kluyveromyces lactis (strain ATCC 8585 / CBS 2359 / DSM 70799 / NBRC 1267 / NRRL Y-1140 / WM37) (Yeast).